Reading from the N-terminus, the 271-residue chain is Multivesicular body subunit 12A (271 aa).

The 143-residue stretch at 7–149 (SAPLAGLVWS…GFAIWCKKSK (143 aa)) folds into the MABP domain. At T128 the chain carries Phosphothreonine. The tract at residues 149–192 (KAPRPVPKPRTLSQDMRGLSLDPPKEPSKGSHPERTLSRLGSRA) is disordered. Residues 153 to 158 (PVPKPR) carry the SH3-binding motif. A phosphoserine mark is found at S161 and S168. Residues 171 to 185 (PPKEPSKGSHPERTL) show a composition bias toward basic and acidic residues. The tract at residues 190 to 271 (SRASTLRRTD…AAARLPPSVS (82 aa)) is interaction with TSG101, VPS37B and VPS28. Phosphoserine is present on residues S193 and S200. Y202 is subject to Phosphotyrosine. S205 carries the post-translational modification Phosphoserine. The UMA domain occupies 213–263 (MDGVPFTLHPRFEGKSCGPLNLSAFGDLTIKSLADIEKEYNYGFVVEKTAA).

It belongs to the MVB12 family. In terms of assembly, component of the ESCRT-I complex (endosomal sorting complex required for transport I) which consists of TSG101, VPS28, a VPS37 protein (VPS37A to -D) and MVB12A or MVB12B in a 1:1:1:1 stoichiometry. Interacts with CD2AP and CIN85/SH3KBP1. Interacts with CD2AP (via one of the SH3 domains). Interacts with TSG101; the association appears to be mediated by the TSG101-VPS37 binary subcomplex. Interacts with VPS28. Interacts with VPS37B; the association appears to be mediated by the TSG101-VPS37 binary subcomplex. Interacts with VPS37C; the association appears to be mediated by the TSG101-VPS37 binary subcomplex. Interacts with VPS37D; the association appears to be mediated by the TSG101-VPS37 binary subcomplex. Interacts with CEP55. Post-translationally, phosphorylated on Tyr-202 upon EGF stimulation. Phosphorylation is required for interaction with CD2AP and CIN85/SH3KBP1.

Its subcellular location is the cytoplasm. It localises to the cytoskeleton. The protein resides in the nucleus. The protein localises to the endosome. It is found in the microtubule organizing center. Its subcellular location is the centrosome. It localises to the late endosome membrane. Functionally, component of the ESCRT-I complex, a regulator of vesicular trafficking process. Required for the sorting of endocytic ubiquitinated cargos into multivesicular bodies. May be involved in the ligand-mediated internalization and down-regulation of EGF receptor. In Mus musculus (Mouse), this protein is Multivesicular body subunit 12A (Mvb12a).